Consider the following 986-residue polypeptide: E3 ubiquitin-protein ligase Arkadia (986 aa).

Glycyl lysine isopeptide (Lys-Gly) (interchain with G-Cter in SUMO2) cross-links involve residues Lys19, Lys28, Lys34, Lys47, Lys59, Lys73, Lys87, Lys96, and Lys110. A compositionally biased stretch (basic and acidic residues) spans 66–89 (HLCDDSQKQEKDMNGNQQEQEKSL). Residues 66–106 (HLCDDSQKQEKDMNGNQQEQEKSLVVRKKRKSQQAGPSYVQ) are disordered. The tract at residues 120 to 191 (QHLGTPSDED…HKWPRTETES (72 aa)) is disordered. A compositionally biased stretch (low complexity) spans 132-151 (SSFSDCLSSPSSSLHFGDSD). Residues 164-173 (RHSQTILNAK) are compositionally biased toward polar residues. A Glycyl lysine isopeptide (Lys-Gly) (interchain with G-Cter in SUMO2) cross-link involves residue Lys173. A compositionally biased stretch (basic residues) spans 174–184 (SRSHSARSHKW). Glycyl lysine isopeptide (Lys-Gly) (interchain with G-Cter in SUMO2) cross-links involve residues Lys198 and Lys218. Residues 241-404 (VLARRKYALL…VPTTSARMES (164 aa)) form an interaction with AXIN1 region. Residues 248 to 277 (ALLPSSSSSSENDLSSESSSSSSTEGEEDL) form a disordered region. The segment covering 252-271 (SSSSSSENDLSSESSSSSST) has biased composition (low complexity). The SUMO interaction motif 1 (SIM) signature appears at 300–304 (VVVIE). Residues 325–331 (EVEIVTV) carry the SUMO interaction motif 2 (SIM) motif. Residues 337 to 373 (SRSTLGHSRSHWSQGSSSHASRPQEPRNRSRISTVIQ) are disordered. Residues 347 to 357 (HWSQGSSSHAS) show a composition bias toward low complexity. The SUMO interaction motif 3 (SIM) motif lies at 382–386 (VVDLT). Disordered stretches follow at residues 389 to 471 (EDEP…ETGP), 506 to 561 (QQHG…SYHE), 610 to 646 (APSQPLSSIDGYGSSMVAQPQPQPPPQPSLSSCRHYM), 659 to 684 (HQASACPHSHGNPPPQTQPPPQVDYV), and 696 to 719 (ISSHATSHPVAPPPPTHLASTAAP). Polar residues predominate over residues 395–466 (VPTTSARMES…DSRRTTSSAV (72 aa)). Basic residues predominate over residues 508 to 522 (HGHHFQHHHHHHHTP). The segment covering 551 to 561 (ANSSSGTSYHE) has biased composition (polar residues). The segment covering 670–680 (NPPPQTQPPPQ) has biased composition (pro residues). Positions 907 to 909 (YPH) are ubiquitin binding. Glycyl lysine isopeptide (Lys-Gly) (interchain with G-Cter in SUMO2) cross-links involve residues Lys915 and Lys919. Zn(2+) is bound by residues Cys934 and Cys937. The RING-type; atypical zinc-finger motif lies at 934-975 (CTICLSILEEGEDVRRLPCMHLFHQVCVDQWLITNKKCPICR). The interval 949–953 (RLPCM) is ubiquitin binding. Zn(2+)-binding residues include His957 and Cys960.

The protein belongs to the Arkadia family. As to quaternary structure, monomer. Interacts with SMAD6, SMAD7, AXIN1, AXIN2 and SKIL isoform SNON. Interacts with (phosphorylated) SMAD2 and SMAD3. Part of a complex containing RNF111, AXIN1 and SMAD7. Interacts (via SIM domains) with SUMO1 and SUMO2.

The protein resides in the nucleus. Its subcellular location is the cytoplasm. It is found in the PML body. It carries out the reaction S-ubiquitinyl-[E2 ubiquitin-conjugating enzyme]-L-cysteine + [acceptor protein]-L-lysine = [E2 ubiquitin-conjugating enzyme]-L-cysteine + N(6)-ubiquitinyl-[acceptor protein]-L-lysine.. It functions in the pathway protein modification; protein ubiquitination. With respect to regulation, binds free ubiquitin non-covalently via its RING-type zinc finger. Ubiquitin-binding leads to enhance the E3 ubiquitin-protein ligase activity by stabilizing the ubiquitin-conjugating enzyme E2 (donor ubiquitin) in the 'closed' conformation and activating ubiquitin transfer. E3 ubiquitin-protein ligase. Required for mesoderm patterning during embryonic development. Acts as an enhancer of the transcriptional responses of the SMAD2/SMAD3 effectors, which are activated downstream of BMP. Acts by mediating ubiquitination and degradation of SMAD inhibitors such as SMAD7, inducing their proteasomal degradation and thereby enhancing the transcriptional activity of TGF-beta and BMP. In addition to enhance transcription of SMAD2/SMAD3 effectors, also regulates their turnover by mediating their ubiquitination and subsequent degradation, coupling their activation with degradation, thereby ensuring that only effectors 'in use' are degraded. Activates SMAD3/SMAD4-dependent transcription by triggering signal-induced degradation of SNON isoform of SKIL. Associates with UBE2D2 as an E2 enzyme. Specifically binds polysumoylated chains via SUMO interaction motifs (SIMs) and mediates ubiquitination of sumoylated substrates. Catalyzes 'Lys-63'-linked ubiquitination of sumoylated XPC in response to UV irradiation, promoting nucleotide excision repair. Mediates ubiquitination and degradation of sumoylated PML. The regulation of the BMP-SMAD signaling is however independent of sumoylation and is not dependent of SUMO interaction motifs (SIMs). The chain is E3 ubiquitin-protein ligase Arkadia (RNF111) from Pongo abelii (Sumatran orangutan).